Here is a 192-residue protein sequence, read N- to C-terminus: SRP-independent targeting protein 2 homolog (192 aa).

The next 2 helical transmembrane spans lie at 16–36 and 102–122; these read ILTF…ILRF and WILI…YLLV. The disordered stretch occupies residues 149–192; it reads LNQPPQQQQQQQQQQHQQHATPSEPVLSKRQQKLRKKAAKYSRP. A compositionally biased stretch (low complexity) spans 151 to 167; the sequence is QPPQQQQQQQQQQHQQH. The span at 178-192 shows a compositional bias: basic residues; it reads RQQKLRKKAAKYSRP.

The protein belongs to the TMEM208 family.

It is found in the endoplasmic reticulum membrane. In terms of biological role, may function in a SRP (signal recognition particle) and GET (guided entry of tail-anchored proteins) independent pathway for targeting a broad range of substrate proteins to the endoplasmic reticulum. Has a role in meiosis. The polypeptide is SRP-independent targeting protein 2 homolog (Schizosaccharomyces pombe (strain 972 / ATCC 24843) (Fission yeast)).